Here is a 590-residue protein sequence, read N- to C-terminus: Negative elongation factor D (590 aa).

Residues 15–43 (FGSAAEWGDEADGGQQEDDYGEGEDDAEV) are disordered. The segment covering 21 to 43 (WGDEADGGQQEDDYGEGEDDAEV) has biased composition (acidic residues).

The protein belongs to the NELF-D family. In terms of assembly, the NELF complex is composed of NELFA, NELFB, NELFCD and NELFE; NELFA and NELFCD form a stable subcomplex that binds primarily through NELFCD to the N-terminus of NELFB. Binds RNA which may help to stabilize the NELF complex on nucleic acid. In vitro, the NELFA:NELFCD subcomplex binds to ssDNA and ssRNA in a sequence- and structure-dependent manner. Interacts with ARAF1. Interacts with PCF11. Interacts with NELFB. Interacts with KAT8.

It is found in the nucleus. Essential component of the NELF complex, a complex that negatively regulates the elongation of transcription by RNA polymerase II. The NELF complex, which acts via an association with the DSIF complex and causes transcriptional pausing, is counteracted by the P-TEFb kinase complex. The chain is Negative elongation factor D (NELFCD) from Sus scrofa (Pig).